Consider the following 204-residue polypeptide: Molybdenum cofactor guanylyltransferase (204 aa).

Residues 10-12, lysine 23, asparagine 51, aspartate 69, and aspartate 99 each bind GTP; that span reads LAG. Mg(2+) is bound at residue aspartate 99.

This sequence belongs to the MobA family. Monomer. Mg(2+) is required as a cofactor.

It localises to the cytoplasm. It catalyses the reaction Mo-molybdopterin + GTP + H(+) = Mo-molybdopterin guanine dinucleotide + diphosphate. Its function is as follows. Transfers a GMP moiety from GTP to Mo-molybdopterin (Mo-MPT) cofactor (Moco or molybdenum cofactor) to form Mo-molybdopterin guanine dinucleotide (Mo-MGD) cofactor. This Shewanella piezotolerans (strain WP3 / JCM 13877) protein is Molybdenum cofactor guanylyltransferase.